The primary structure comprises 609 residues: Zinc metalloproteinase-disintegrin-like VMP-III (609 aa).

The first 20 residues, 1–20 (MIQVLLVTICLAAFPYQGSS), serve as a signal peptide directing secretion. The propeptide occupies 21–189 (IILESGNVND…KKASQLVVTA (169 aa)). In terms of domain architecture, Peptidase M12B spans 198–393 (RFVELFLVVD…HNPECILNEP (196 aa)). Residues E201 and D285 each contribute to the Ca(2+) site. 3 disulfide bridges follow: C308-C388, C348-C372, and C350-C355. H333 serves as a coordination point for Zn(2+). E334 is an active-site residue. H337 and H343 together coordinate Zn(2+). The N-linked (GlcNAc...) asparagine glycan is linked to N371. Residues C388, N391, V403, N406, L408, E410, E413, and D416 each contribute to the Ca(2+) site. The Disintegrin domain maps to 401 to 487 (PPVCGNELLE…ECPADVFHKN (87 aa)). Disulfide bonds link C404/C433, C415/C428, C417/C423, C427/C450, C441/C447, C446/C472, C459/C479, C466/C498, C491/C503, C510/C560, C525/C571, C538/C548, C555/C597, and C591/C602. The D/ECD-tripeptide motif lies at 465 to 467 (ECD). The Ca(2+) site is built by D467, P468, E470, D482, and V483.

It belongs to the venom metalloproteinase (M12B) family. P-III subfamily. P-IIIa sub-subfamily. In terms of assembly, monomer. Zn(2+) serves as cofactor. As to expression, expressed by the venom gland.

Its subcellular location is the secreted. Functionally, snake venom metalloproteinase that impairs hemostasis in the envenomed animal. This is Zinc metalloproteinase-disintegrin-like VMP-III from Crotalus viridis viridis (Prairie rattlesnake).